A 469-amino-acid chain; its full sequence is Tubulin gamma-2 chain (469 aa).

142 to 148 (AGGTGSG) lines the GTP pocket.

The protein belongs to the tubulin family.

The protein resides in the cytoplasm. The protein localises to the cytoskeleton. Its subcellular location is the microtubule organizing center. Its function is as follows. Tubulin is the major constituent of microtubules. The gamma chain is found at microtubule organizing centers (MTOC) such as the spindle poles, suggesting that it is involved in the minus-end nucleation of microtubule assembly. The sequence is that of Tubulin gamma-2 chain (TUBG2) from Zea mays (Maize).